Here is an 88-residue protein sequence, read N- to C-terminus: Small ribosomal subunit protein uS15c (88 aa).

Belongs to the universal ribosomal protein uS15 family. Part of the 30S ribosomal subunit.

It localises to the plastid. The protein localises to the chloroplast. This Aethionema cordifolium (Lebanon stonecress) protein is Small ribosomal subunit protein uS15c (rps15).